A 227-amino-acid polypeptide reads, in one-letter code: Glutathione S-transferase U13 (227 aa).

The GST N-terminal domain occupies 5-86 (DTVKLIGSWS…YVDEAWPSVP (82 aa)). Residues 15–16 (SP), 43–44 (EK), 57–58 (KV), and 70–71 (ES) contribute to the glutathione site. A GST C-terminal domain is found at 92–224 (DAYDRASARF…EVVAFAKQKF (133 aa)). Phosphothreonine is present on Thr-158.

It belongs to the GST superfamily. Tau family.

The protein resides in the cytoplasm. The protein localises to the cytosol. The enzyme catalyses RX + glutathione = an S-substituted glutathione + a halide anion + H(+). Its function is as follows. In vitro, possesses glutathione S-transferase activity toward 1-chloro-2,4-dinitrobenzene (CDNB) and benzyl isothiocyanate (BITC). May be involved in the conjugation of reduced glutathione to a wide number of exogenous and endogenous hydrophobic electrophiles and have a detoxification role against certain herbicides. This Arabidopsis thaliana (Mouse-ear cress) protein is Glutathione S-transferase U13 (GSTU13).